The primary structure comprises 168 residues: ATP synthase subunit d, mitochondrial (168 aa).

It belongs to the ATPase d subunit family. As to quaternary structure, F-type ATPases have 2 components, CF(1) - the catalytic core - and CF(0) - the membrane proton channel. CF(0) seems to have nine subunits: a, b, c, d, e, f, g, F6 and 8 (or A6L).

Its subcellular location is the mitochondrion. The protein resides in the mitochondrion inner membrane. Functionally, mitochondrial membrane ATP synthase (F(1)F(0) ATP synthase or Complex V) produces ATP from ADP in the presence of a proton gradient across the membrane which is generated by electron transport complexes of the respiratory chain. F-type ATPases consist of two structural domains, F(1) - containing the extramembraneous catalytic core, and F(0) - containing the membrane proton channel, linked together by a central stalk and a peripheral stalk. During catalysis, ATP synthesis in the catalytic domain of F(1) is coupled via a rotary mechanism of the central stalk subunits to proton translocation. Part of the complex F(0) domain and the peripheric stalk, which acts as a stator to hold the catalytic alpha(3)beta(3) subcomplex and subunit a/ATP6 static relative to the rotary elements. The polypeptide is ATP synthase subunit d, mitochondrial (Arabidopsis thaliana (Mouse-ear cress)).